A 190-amino-acid polypeptide reads, in one-letter code: Elongation factor P-like protein (190 aa).

It belongs to the elongation factor P family.

The protein is Elongation factor P-like protein of Pseudoalteromonas translucida (strain TAC 125).